Consider the following 232-residue polypeptide: Flagellar L-ring protein (232 aa).

A signal peptide spans 1–21 (MQKYALHAYPVMALMVATLTG). Cysteine 22 carries the N-palmitoyl cysteine lipid modification. Cysteine 22 carries the S-diacylglycerol cysteine lipid modification.

This sequence belongs to the FlgH family. In terms of assembly, the basal body constitutes a major portion of the flagellar organelle and consists of four rings (L,P,S, and M) mounted on a central rod.

Its subcellular location is the cell outer membrane. The protein resides in the bacterial flagellum basal body. In terms of biological role, assembles around the rod to form the L-ring and probably protects the motor/basal body from shearing forces during rotation. This chain is Flagellar L-ring protein, found in Salmonella choleraesuis (strain SC-B67).